The following is a 334-amino-acid chain: Phosphoribosylformylglycinamidine cyclo-ligase (334 aa).

The protein belongs to the AIR synthase family.

The protein localises to the cytoplasm. The enzyme catalyses 2-formamido-N(1)-(5-O-phospho-beta-D-ribosyl)acetamidine + ATP = 5-amino-1-(5-phospho-beta-D-ribosyl)imidazole + ADP + phosphate + H(+). The protein operates within purine metabolism; IMP biosynthesis via de novo pathway; 5-amino-1-(5-phospho-D-ribosyl)imidazole from N(2)-formyl-N(1)-(5-phospho-D-ribosyl)glycinamide: step 2/2. This Thermococcus kodakarensis (strain ATCC BAA-918 / JCM 12380 / KOD1) (Pyrococcus kodakaraensis (strain KOD1)) protein is Phosphoribosylformylglycinamidine cyclo-ligase.